A 550-amino-acid polypeptide reads, in one-letter code: Chaperonin GroEL (550 aa).

ATP-binding positions include Thr-30–Pro-33, Lys-51, Asp-87–Thr-91, Gly-415, Asn-479–Ala-481, and Asp-495.

The protein belongs to the chaperonin (HSP60) family. In terms of assembly, forms a cylinder of 14 subunits composed of two heptameric rings stacked back-to-back. Interacts with the co-chaperonin GroES.

The protein localises to the cytoplasm. It catalyses the reaction ATP + H2O + a folded polypeptide = ADP + phosphate + an unfolded polypeptide.. In terms of biological role, together with its co-chaperonin GroES, plays an essential role in assisting protein folding. The GroEL-GroES system forms a nano-cage that allows encapsulation of the non-native substrate proteins and provides a physical environment optimized to promote and accelerate protein folding. The sequence is that of Chaperonin GroEL from Marinobacter nauticus (strain ATCC 700491 / DSM 11845 / VT8) (Marinobacter aquaeolei).